Here is a 316-residue protein sequence, read N- to C-terminus: 4-diphosphocytidyl-2-C-methyl-D-erythritol kinase (316 aa).

Lys-14 is a catalytic residue. 96–106 contributes to the ATP binding site; it reads PMGAGLGGGSS. Residue Asp-138 is part of the active site.

Belongs to the GHMP kinase family. IspE subfamily.

It carries out the reaction 4-CDP-2-C-methyl-D-erythritol + ATP = 4-CDP-2-C-methyl-D-erythritol 2-phosphate + ADP + H(+). The protein operates within isoprenoid biosynthesis; isopentenyl diphosphate biosynthesis via DXP pathway; isopentenyl diphosphate from 1-deoxy-D-xylulose 5-phosphate: step 3/6. Catalyzes the phosphorylation of the position 2 hydroxy group of 4-diphosphocytidyl-2C-methyl-D-erythritol. This chain is 4-diphosphocytidyl-2-C-methyl-D-erythritol kinase, found in Solibacter usitatus (strain Ellin6076).